The following is a 226-amino-acid chain: Protein GrpE (226 aa).

Disordered stretches follow at residues 1-31 and 189-226; these read MTPN…PDTL and VSKG…PAEA. Positions 192–218 are enriched in low complexity; the sequence is GGPKAAEASKPAGEAPKPAGEAPKPAG.

The protein belongs to the GrpE family. Homodimer.

The protein resides in the cytoplasm. In terms of biological role, participates actively in the response to hyperosmotic and heat shock by preventing the aggregation of stress-denatured proteins, in association with DnaK and GrpE. It is the nucleotide exchange factor for DnaK and may function as a thermosensor. Unfolded proteins bind initially to DnaJ; upon interaction with the DnaJ-bound protein, DnaK hydrolyzes its bound ATP, resulting in the formation of a stable complex. GrpE releases ADP from DnaK; ATP binding to DnaK triggers the release of the substrate protein, thus completing the reaction cycle. Several rounds of ATP-dependent interactions between DnaJ, DnaK and GrpE are required for fully efficient folding. The polypeptide is Protein GrpE (Methylobacterium nodulans (strain LMG 21967 / CNCM I-2342 / ORS 2060)).